A 415-amino-acid polypeptide reads, in one-letter code: Serine--tRNA ligase (415 aa).

231–233 (TAE) serves as a coordination point for L-serine. 262 to 264 (RSE) provides a ligand contact to ATP. Glutamate 285 serves as a coordination point for L-serine. Position 349–352 (349–352 (EISS)) interacts with ATP. Serine 383 is an L-serine binding site.

Belongs to the class-II aminoacyl-tRNA synthetase family. Type-1 seryl-tRNA synthetase subfamily. In terms of assembly, homodimer. The tRNA molecule binds across the dimer.

It is found in the cytoplasm. The enzyme catalyses tRNA(Ser) + L-serine + ATP = L-seryl-tRNA(Ser) + AMP + diphosphate + H(+). The catalysed reaction is tRNA(Sec) + L-serine + ATP = L-seryl-tRNA(Sec) + AMP + diphosphate + H(+). It functions in the pathway aminoacyl-tRNA biosynthesis; selenocysteinyl-tRNA(Sec) biosynthesis; L-seryl-tRNA(Sec) from L-serine and tRNA(Sec): step 1/1. Catalyzes the attachment of serine to tRNA(Ser). Is also able to aminoacylate tRNA(Sec) with serine, to form the misacylated tRNA L-seryl-tRNA(Sec), which will be further converted into selenocysteinyl-tRNA(Sec). This Helicobacter acinonychis (strain Sheeba) protein is Serine--tRNA ligase.